The primary structure comprises 288 residues: UDP-3-O-acyl-N-acetylglucosamine deacetylase (288 aa).

Positions 79, 236, and 240 each coordinate Zn(2+). Histidine 263 functions as the Proton donor in the catalytic mechanism.

This sequence belongs to the LpxC family. Zn(2+) serves as cofactor.

It catalyses the reaction a UDP-3-O-[(3R)-3-hydroxyacyl]-N-acetyl-alpha-D-glucosamine + H2O = a UDP-3-O-[(3R)-3-hydroxyacyl]-alpha-D-glucosamine + acetate. The protein operates within glycolipid biosynthesis; lipid IV(A) biosynthesis; lipid IV(A) from (3R)-3-hydroxytetradecanoyl-[acyl-carrier-protein] and UDP-N-acetyl-alpha-D-glucosamine: step 2/6. Its function is as follows. Catalyzes the hydrolysis of UDP-3-O-myristoyl-N-acetylglucosamine to form UDP-3-O-myristoylglucosamine and acetate, the committed step in lipid A biosynthesis. This chain is UDP-3-O-acyl-N-acetylglucosamine deacetylase, found in Rickettsia africae (strain ESF-5).